Consider the following 423-residue polypeptide: Putative competence-damage inducible protein (423 aa).

Belongs to the CinA family.

The polypeptide is Putative competence-damage inducible protein (Streptococcus pyogenes serotype M3 (strain ATCC BAA-595 / MGAS315)).